The following is a 703-amino-acid chain: Ion-translocating oxidoreductase complex subunit C (703 aa).

4Fe-4S ferredoxin-type domains follow at residues 369 to 398 (YDPQ…QQMY) and 408 to 437 (KSNQ…IQYF). Residues cysteine 378, cysteine 381, cysteine 384, cysteine 388, cysteine 417, cysteine 420, cysteine 423, and cysteine 427 each contribute to the [4Fe-4S] cluster site. Disordered regions lie at residues 467–542 (RLER…PDNS) and 555–680 (RQQT…PKKA). The segment covering 485–497 (ARREELAANKGED) has biased composition (basic and acidic residues). Low complexity predominate over residues 559 to 577 (NGNSPVSSASNSDSATISA). Positions 578–592 (DNTHSTPKTAQNQTA) are enriched in polar residues. Low complexity-rich tracts occupy residues 598-629 (AAVA…TEKT) and 641-669 (AAVA…EKTA).

Belongs to the 4Fe4S bacterial-type ferredoxin family. RnfC subfamily. In terms of assembly, the complex is composed of six subunits: RnfA, RnfB, RnfC, RnfD, RnfE and RnfG. [4Fe-4S] cluster serves as cofactor.

Its subcellular location is the cell inner membrane. Its function is as follows. Part of a membrane-bound complex that couples electron transfer with translocation of ions across the membrane. In Actinobacillus succinogenes (strain ATCC 55618 / DSM 22257 / CCUG 43843 / 130Z), this protein is Ion-translocating oxidoreductase complex subunit C.